Reading from the N-terminus, the 108-residue chain is MAPKKDKVPPPSSKPAKSGGGKQKKKKWSKGKQKEKVNNMVLFDQATYDKLLTEAPKFKLITPSILSDRMRINGSLARRAIRELMAKGVIRMVAAHSSQQIYTRATNT.

Residues 1–36 (MAPKKDKVPPPSSKPAKSGGGKQKKKKWSKGKQKEK) form a disordered region. The span at 22-31 (KQKKKKWSKG) shows a compositional bias: basic residues.

It belongs to the eukaryotic ribosomal protein eS25 family.

The protein is Small ribosomal subunit protein eS25w (RPS25E) of Arabidopsis thaliana (Mouse-ear cress).